Reading from the N-terminus, the 212-residue chain is Pyridoxine/pyridoxamine 5'-phosphate oxidase (212 aa).

Substrate is bound by residues 8 to 11 and Lys-66; that span reads RREY. Residues 61-66, 76-77, Arg-82, Lys-83, and Gln-105 each bind FMN; these read RIVLLK and FT. Residues Tyr-123, Arg-127, and Ser-131 each contribute to the substrate site. Residues 140–141 and Trp-185 each bind FMN; that span reads QS. 191 to 193 lines the substrate pocket; sequence RLH. Arg-195 is a binding site for FMN.

The protein belongs to the pyridoxamine 5'-phosphate oxidase family. In terms of assembly, homodimer. Requires FMN as cofactor.

It catalyses the reaction pyridoxamine 5'-phosphate + O2 + H2O = pyridoxal 5'-phosphate + H2O2 + NH4(+). It carries out the reaction pyridoxine 5'-phosphate + O2 = pyridoxal 5'-phosphate + H2O2. The protein operates within cofactor metabolism; pyridoxal 5'-phosphate salvage; pyridoxal 5'-phosphate from pyridoxamine 5'-phosphate: step 1/1. Its pathway is cofactor metabolism; pyridoxal 5'-phosphate salvage; pyridoxal 5'-phosphate from pyridoxine 5'-phosphate: step 1/1. Functionally, catalyzes the oxidation of either pyridoxine 5'-phosphate (PNP) or pyridoxamine 5'-phosphate (PMP) into pyridoxal 5'-phosphate (PLP). The protein is Pyridoxine/pyridoxamine 5'-phosphate oxidase of Shewanella sp. (strain MR-4).